A 259-amino-acid polypeptide reads, in one-letter code: Chloroplastic group IIB intron splicing facilitator CRS2, chloroplastic (259 aa).

The segment at 1 to 21 (MSLAVATPASARLSPLTTSSP) is disordered. The N-terminal 49 residues, 1-49 (MSLAVATPASARLSPLTTSSPEPCRRRRLLLSAAAPLRRTRLRRRIAVV), are a transit peptide targeting the chloroplast. Tyr77 contributes to the tRNA binding site. Residue His82 is the Proton acceptor of the active site. Positions 127, 129, and 175 each coordinate tRNA.

It belongs to the PTH family. CRS2 subfamily. Part of large ribonucleo-protein complexes that include group IIB introns and either CAF1 or CAF2.

Its subcellular location is the plastid. It is found in the chloroplast stroma. Functionally, required for the splicing of group IIB introns in chloroplasts. The polypeptide is Chloroplastic group IIB intron splicing facilitator CRS2, chloroplastic (Oryza sativa subsp. japonica (Rice)).